Reading from the N-terminus, the 425-residue chain is Glutamyl-tRNA reductase (425 aa).

Substrate contacts are provided by residues 49–52, serine 109, 114–116, and glutamine 120; these read TCNR and EGQ. Cysteine 50 serves as the catalytic Nucleophile. Position 189 to 194 (189 to 194) interacts with NADP(+); sequence GAGETG.

Belongs to the glutamyl-tRNA reductase family. In terms of assembly, homodimer.

It carries out the reaction (S)-4-amino-5-oxopentanoate + tRNA(Glu) + NADP(+) = L-glutamyl-tRNA(Glu) + NADPH + H(+). Its pathway is porphyrin-containing compound metabolism; protoporphyrin-IX biosynthesis; 5-aminolevulinate from L-glutamyl-tRNA(Glu): step 1/2. It participates in porphyrin-containing compound metabolism; chlorophyll biosynthesis. Functionally, catalyzes the NADPH-dependent reduction of glutamyl-tRNA(Glu) to glutamate 1-semialdehyde (GSA). In Chlorobium phaeovibrioides (strain DSM 265 / 1930) (Prosthecochloris vibrioformis (strain DSM 265)), this protein is Glutamyl-tRNA reductase.